The primary structure comprises 522 residues: uncharacterized protein (522 aa).

This is an uncharacterized protein from Sinorhizobium fredii (strain NBRC 101917 / NGR234).